The primary structure comprises 78 residues: Acyl carrier protein (78 aa).

Residues 1–76 enclose the Carrier domain; that stretch reads MALFEDIQAV…DVVKYIEDNK (76 aa). Serine 36 is modified (O-(pantetheine 4'-phosphoryl)serine).

This sequence belongs to the acyl carrier protein (ACP) family. In terms of processing, 4'-phosphopantetheine is transferred from CoA to a specific serine of apo-ACP by AcpS. This modification is essential for activity because fatty acids are bound in thioester linkage to the sulfhydryl of the prosthetic group.

Its subcellular location is the cytoplasm. The protein operates within lipid metabolism; fatty acid biosynthesis. Functionally, carrier of the growing fatty acid chain in fatty acid biosynthesis. This chain is Acyl carrier protein, found in Helicobacter acinonychis (strain Sheeba).